The primary structure comprises 569 residues: MMRFTKFYAPSLKEAPKDASLPSHIFLTRAGFVEQIGSGLYNFLPLGKRVLDKIKNIVKEEMDKAGAQEVNLSFITPASLWQESGRYNVFGKELLRFKDRKKNEFVLGPTHEEAMLSLVKNKITSYKQLPLHLYQIGLKFRDEARPRFGLLRCREFLMKDGYSFHANEEDLGREFELMYKTYSQILQRMGLDFRAVEADSGAIGGSGSKEFMVLAKNGEDDILICENCDYAANVEAAKRAKKTCQDERPEANYASKFHTPNIKTIDSLAQFFKINAFYTIKAVVKKAIYENESKLVVFFIRGSDDLQEIKAQNACSALELVDASEEELEKAGLVAGFIGFVGLKDIDFYIDFELENEKQMIMGANEKDYHLIGIDVVNLNKDRFKDLIEVKEGDCCVKCGAKLKQSKGIEVGHIFKLGQKYSKAMNANFLDENGKSQPFYMGCYGIGVSRLLAVAIEANHDEKGCIWNKTLAPFVLEIIVSNLKDEKALEFANKLYEDLTNLGLEVLLDDRNERFGVKMNDFELMGFPYALVIGKGLENNEIELIQREDLVKELIKTDELMEILKKKVL.

This sequence belongs to the class-II aminoacyl-tRNA synthetase family. ProS type 1 subfamily. As to quaternary structure, homodimer.

It is found in the cytoplasm. It catalyses the reaction tRNA(Pro) + L-proline + ATP = L-prolyl-tRNA(Pro) + AMP + diphosphate. Functionally, catalyzes the attachment of proline to tRNA(Pro) in a two-step reaction: proline is first activated by ATP to form Pro-AMP and then transferred to the acceptor end of tRNA(Pro). As ProRS can inadvertently accommodate and process non-cognate amino acids such as alanine and cysteine, to avoid such errors it has two additional distinct editing activities against alanine. One activity is designated as 'pretransfer' editing and involves the tRNA(Pro)-independent hydrolysis of activated Ala-AMP. The other activity is designated 'posttransfer' editing and involves deacylation of mischarged Ala-tRNA(Pro). The misacylated Cys-tRNA(Pro) is not edited by ProRS. This is Proline--tRNA ligase from Campylobacter jejuni subsp. jejuni serotype O:23/36 (strain 81-176).